Consider the following 181-residue polypeptide: Anthrone oxygenase encC (181 aa).

The next 4 membrane-spanning stretches (helical) occupy residues 1–21 (MASVQGLIKIVAITGGVWLSG), 65–81 (QIAACTSTAFAYLAWCA), 88–108 (LLYGTAACSVMGIVPYTLLFM), and 153–173 (FLAGIRGLLPLAGGILGLFAA).

The protein belongs to the anthrone oxygenase family. As to expression, endocrocin is specifically produced in conidia.

It localises to the membrane. Functionally, anthrone oxygenase; part of the gene cluster that mediates the biosynthesis of endocrocin, a simple anthraquinone interesting for many biotechnological applications. The pathway begins with the synthesis of atrochrysone thioester by the polyketide synthase (PKS) encA. The atrochrysone carboxyl ACP thioesterase encB then breaks the thioester bond and releases the atrochrysone carboxylic acid from encA. The atrochrysone carboxylic acid is then converted to endocrocin anthrone which is further oxidized into endocrocin by the anthrone oxygenase encC. The exact function of encD has not been identified yet, but it negatively regulates endocrocin production, likely through the modification of endocrocin itself. The polypeptide is Anthrone oxygenase encC (Aspergillus fumigatus (strain ATCC MYA-4609 / CBS 101355 / FGSC A1100 / Af293) (Neosartorya fumigata)).